Here is a 404-residue protein sequence, read N- to C-terminus: MNQTLDNIVSLAKQCRGHHHYDISIEQIVVSHEAFNQLAAYLRYKQYKKVVVVADNRTFTAAGRSLCDKLKNESVLYTVCLIQSDENEDVIADERAIMQVLLETPNDVDAFIAVGAGTVHDITRFSSYKMKVPFISVPTAPSVDGFTSMGAPLIIRGVKKTIQAQAPIAVFADTDVLCQAPKAMIAAGFGDMVAKYTSLADWQFAHWMANEPYCPLVYQLTIQSLNACVDHMEDIAAGNEKGIHVLMDALLQSGIAMLLMGQSYSASGAEHHLSHYWEMEFLRQNKRQVLHGAKVGVSTPIIVEHYQRVFWPLLSELKQRPKSMDETIWERLKIYTDSIQELLESLPSPERIRAMVEKVGGAVAPQQLGIDPLLVERSLKEAHRLRLNRFTMLYCLNECMLMEG.

NAD(+)-binding positions include D55, G117–D121, and T139–S142. Residue D144 participates in substrate binding. S148 contacts NAD(+). Residue D191 coordinates substrate. Ni(2+) is bound by residues D191 and H271. H275 contacts substrate. H291 provides a ligand contact to Ni(2+).

This sequence belongs to the glycerol-1-phosphate dehydrogenase family. In terms of assembly, homodimer. Ni(2+) serves as cofactor.

It is found in the cytoplasm. It carries out the reaction sn-glycerol 1-phosphate + NAD(+) = dihydroxyacetone phosphate + NADH + H(+). The catalysed reaction is sn-glycerol 1-phosphate + NADP(+) = dihydroxyacetone phosphate + NADPH + H(+). Its function is as follows. Catalyzes the NAD(P)H-dependent reduction of dihydroxyacetonephosphate (DHAP or glycerone phosphate) to glycerol 1-phosphate (G1P). The G1P thus generated is probably used for the synthesis of phosphoglycerolipids in Gram-positive bacterial species. The protein is Glycerol-1-phosphate dehydrogenase [NAD(P)+] of Geobacillus thermodenitrificans (strain NG80-2).